A 660-amino-acid chain; its full sequence is DNA mismatch repair protein MutL (660 aa).

The protein belongs to the DNA mismatch repair MutL/HexB family.

Functionally, this protein is involved in the repair of mismatches in DNA. It is required for dam-dependent methyl-directed DNA mismatch repair. May act as a 'molecular matchmaker', a protein that promotes the formation of a stable complex between two or more DNA-binding proteins in an ATP-dependent manner without itself being part of a final effector complex. In Streptococcus equi subsp. equi (strain 4047), this protein is DNA mismatch repair protein MutL.